Here is a 258-residue protein sequence, read N- to C-terminus: Tetraspanin-18B (258 aa).

The Cytoplasmic portion of the chain corresponds to 1–25 (MGLGEASARGTSMEGDCLSCIKYLM). A helical membrane pass occupies residues 26–46 (FVFNFLIFLGGSFLLGVGVWV). Residues 47-61 (VVDPTGFREIVAANP) lie on the Extracellular side of the membrane. Residues 62-82 (LLFTGVYIILAMGGMLFLLGF) form a helical membrane-spanning segment. Over 83 to 94 (LGCCGAIRENKC) the chain is Cytoplasmic. A helical transmembrane segment spans residues 95–115 (LLLFFFMLILIIFLAELAAAI). Residues 116-228 (LAFIFREHLT…SAVVDYFEMY (113 aa)) are Extracellular-facing. Asparagine 141 is a glycosylation site (N-linked (GlcNAc...) asparagine). A helical membrane pass occupies residues 229–249 (IYVAGALAIVVLTIELFAMVF). Topologically, residues 250–258 (AMCLFRGIQ) are cytoplasmic.

It belongs to the tetraspanin (TM4SF) family.

The protein localises to the membrane. May regulate angiogenesis through KDR/VEGFR2 and NOTCH1 pathways. The polypeptide is Tetraspanin-18B (tspan18b) (Danio rerio (Zebrafish)).